Reading from the N-terminus, the 369-residue chain is UDP-N-acetylglucosamine--N-acetylmuramyl-(pentapeptide) pyrophosphoryl-undecaprenol N-acetylglucosamine transferase (369 aa).

Residues 10-12, N124, S195, I252, and Q297 each bind UDP-N-acetyl-alpha-D-glucosamine; that span reads TGG.

It belongs to the glycosyltransferase 28 family. MurG subfamily.

The protein resides in the cell membrane. The enzyme catalyses Mur2Ac(oyl-L-Ala-gamma-D-Glu-L-Lys-D-Ala-D-Ala)-di-trans,octa-cis-undecaprenyl diphosphate + UDP-N-acetyl-alpha-D-glucosamine = beta-D-GlcNAc-(1-&gt;4)-Mur2Ac(oyl-L-Ala-gamma-D-Glu-L-Lys-D-Ala-D-Ala)-di-trans,octa-cis-undecaprenyl diphosphate + UDP + H(+). It participates in cell wall biogenesis; peptidoglycan biosynthesis. In terms of biological role, cell wall formation. Catalyzes the transfer of a GlcNAc subunit on undecaprenyl-pyrophosphoryl-MurNAc-pentapeptide (lipid intermediate I) to form undecaprenyl-pyrophosphoryl-MurNAc-(pentapeptide)GlcNAc (lipid intermediate II). This chain is UDP-N-acetylglucosamine--N-acetylmuramyl-(pentapeptide) pyrophosphoryl-undecaprenol N-acetylglucosamine transferase, found in Leuconostoc citreum (strain KM20).